The sequence spans 398 residues: UDP-D-apiose/UDP-D-xylose synthase (398 aa).

57-88 (DVYCDKIRHLVDPAPPHLHGRISFHRLNIKND) contacts NAD(+). Arg-190 contacts substrate. The Proton acceptor role is filled by Tyr-193. Position 193–197 (193–197 (YACAK)) interacts with NAD(+). Residue Asn-222 participates in substrate binding. An NAD(+)-binding site is contributed by Arg-243. Residues 244–248 (VLACF), 261–268 (VDGGQSQR), and 345–349 (DSDKR) contribute to the substrate site.

Belongs to the NAD(P)-dependent epimerase/dehydratase family. As to quaternary structure, homodimer. Requires NAD(+) as cofactor.

The protein resides in the cytoplasm. In terms of biological role, catalyzes the conversion of UDP-D-glucuronate to a mixture of UDP-D-apiose and UDP-D-xylose. D-Apiose (3-C-hydroxymethyl-d-erythrose) is the only plant cell wall monosaccharide with a branched carbon skeleton and found in rhamnogalacturonan II (RG-II), apiogalacturonan, and several apioglycosides. The protein is UDP-D-apiose/UDP-D-xylose synthase of Oryza sativa subsp. japonica (Rice).